The primary structure comprises 245 residues: PF03932 family protein CutC (245 aa).

Belongs to the CutC family.

The protein resides in the cytoplasm. This Rhizobium meliloti (strain 1021) (Ensifer meliloti) protein is PF03932 family protein CutC.